The chain runs to 489 residues: WRKY transcription factor 72B (489 aa).

Disordered regions lie at residues 1 to 100 (MENK…EMRE), 131 to 159 (QKET…QEAD), and 234 to 267 (DENE…RARV). Basic and acidic residues-rich tracts occupy residues 32-52 (GRKE…KDYM) and 83-100 (THKE…EMRE). A coiled-coil region spans residues 84–132 (HKEQDDQLASAKDEMREVMEENQRLRMHLDRMMKEYRNLQNQFHDIVQK). Over residues 138-147 (SSSTTVNTST) the composition is skewed to low complexity. Residues 273–339 (CDAPTMNDGC…YEGTHNHTLP (67 aa)) constitute a DNA-binding region (WRKY). Disordered regions lie at residues 356 to 381 (LLSG…PTTT) and 427 to 454 (TSTS…YNYN). 2 stretches are compositionally biased toward low complexity: residues 371–381 (TATTTTTPTTT) and 427–438 (TSTSSSSPSSLS).

Belongs to the WRKY group II-b family.

Its subcellular location is the nucleus. Its function is as follows. In association with WRKY72A, contributes to basal defense against root-knot nematodes (RKNs) and potato aphids, as well as Mi-1-mediated gene-for-gene resistance to these pests. Both WRKY72A and WRKY72B are not required for gene-for-gene resistance mediated by Pto, another tomato R gene. This chain is WRKY transcription factor 72B, found in Solanum lycopersicum (Tomato).